The chain runs to 141 residues: Large ribosomal subunit protein uL11 (141 aa).

This sequence belongs to the universal ribosomal protein uL11 family. As to quaternary structure, part of the ribosomal stalk of the 50S ribosomal subunit. Interacts with L10 and the large rRNA to form the base of the stalk. L10 forms an elongated spine to which L12 dimers bind in a sequential fashion forming a multimeric L10(L12)X complex. In terms of processing, one or more lysine residues are methylated.

Functionally, forms part of the ribosomal stalk which helps the ribosome interact with GTP-bound translation factors. This chain is Large ribosomal subunit protein uL11, found in Synechococcus sp. (strain ATCC 27144 / PCC 6301 / SAUG 1402/1) (Anacystis nidulans).